The primary structure comprises 337 residues: D-alanine--D-alanine ligase (337 aa).

In terms of domain architecture, ATP-grasp spans 124-330; the sequence is KMWFSALGIP…FTEYLSLVIN (207 aa). Position 154 to 209 (154 to 209) interacts with ATP; the sequence is ALANWGSIFIKAASQGSSVGCYKVDDSSKVAQVLKDAFGYAPYVVVEKTIKARELE. Mg(2+) is bound by residues aspartate 284, glutamate 297, and asparagine 299.

Belongs to the D-alanine--D-alanine ligase family. Mg(2+) is required as a cofactor. It depends on Mn(2+) as a cofactor.

The protein resides in the cytoplasm. It catalyses the reaction 2 D-alanine + ATP = D-alanyl-D-alanine + ADP + phosphate + H(+). It participates in cell wall biogenesis; peptidoglycan biosynthesis. In terms of biological role, cell wall formation. This Shewanella putrefaciens (strain CN-32 / ATCC BAA-453) protein is D-alanine--D-alanine ligase.